The following is a 355-amino-acid chain: UPF0421 protein BCE_2776 (355 aa).

Helical transmembrane passes span 19–39 (IAVFLTVLVCEFFNIPTIFAV), 74–94 (FTFFLGHQALSYALAAMFTIV), 109–129 (TLTAVAMIPITADHYFTAFLI), and 131–151 (LATTSTGIIVSTLVNFFILPP).

Belongs to the UPF0421 family.

It is found in the cell membrane. The chain is UPF0421 protein BCE_2776 from Bacillus cereus (strain ATCC 10987 / NRS 248).